The following is a 580-amino-acid chain: External alternative NAD(P)H-ubiquinone oxidoreductase B3, mitochondrial (580 aa).

A mitochondrion-targeting transit peptide spans 1 to 38; that stretch reads MRPFAYFERLSQAFHDYPSLSKILVVSTISGGGLIVYS. FAD is bound at residue 57–87; it reads KVVLLGTGWAGASFLKTLNNSSYEVQVISPR. 221-257 is a binding site for NAD(+); it reads LHFVVVGGGPTGVEFASELHDFVNEDLVKLYPKAKNL. Positions 377–412 constitute an EF-hand domain; sequence KVMEDIAAIFKKADKENSGTLTMKEFHEVMSDICDR. Ca(2+)-binding residues include Asp390, Ser394, Thr396, and Glu401. Residues 571–580 carry the Microbody targeting signal motif; sequence FIFGRDSSRI.

This sequence belongs to the NADH dehydrogenase family. FAD serves as cofactor. As to expression, expressed at low levels in seedlings, roots, stems, buds and flowers and, to a lower extent, in leaves and cotyledons.

Its subcellular location is the mitochondrion inner membrane. It is found in the peroxisome. It catalyses the reaction a quinone + NADH + H(+) = a quinol + NAD(+). It carries out the reaction a ubiquinone + NADH + H(+) = a ubiquinol + NAD(+). In terms of biological role, alternative NADH-ubiquinone oxidoreductase which catalyzes the oxidation of mitochondrial NADH does not translocate protons across the inner mitochondrial membrane. In Arabidopsis thaliana (Mouse-ear cress), this protein is External alternative NAD(P)H-ubiquinone oxidoreductase B3, mitochondrial (NDB3).